The chain runs to 244 residues: DNA repair protein RecO (244 aa).

It belongs to the RecO family.

Involved in DNA repair and RecF pathway recombination. This Ehrlichia chaffeensis (strain ATCC CRL-10679 / Arkansas) protein is DNA repair protein RecO.